The following is a 650-amino-acid chain: GATA zinc finger domain-containing protein 11 (650 aa).

Residues 16-79 (LYNNTNTNSN…NSSNSLSSSF (64 aa)) are compositionally biased toward low complexity. Disordered regions lie at residues 16 to 96 (LYNN…SGYN), 111 to 181 (KRSN…TTPL), 221 to 335 (NNSN…NNNK), and 409 to 515 (RIFG…NKRK). Positions 116 to 129 (LDDNMSVPTLQNFT) are enriched in polar residues. Composition is skewed to low complexity over residues 130–180 (NNNN…PTTP) and 221–260 (NNSN…NNNN). Polar residues predominate over residues 261–272 (QSIVPQSIHLQS). Low complexity predominate over residues 273 to 334 (TTPQIQPLSL…NNSYNTNNNN (62 aa)). The segment covering 425 to 434 (RPRRFRKSKV) has biased composition (basic residues). The segment covering 442 to 511 (HNNNNNNINN…GNGNTNSTNN (70 aa)) has biased composition (low complexity). A GATA-type zinc finger spans residues 522-547 (CTSCGTTSSPEWRKGPAGNQSLCNAC). The segment at 619-650 (QQQQQQQQQQQNHHHQQLQQQQQQQQQQQLHH) is disordered.

Its function is as follows. Transcription factor that regulates morphogenetic cell movement during development. In Dictyostelium discoideum (Social amoeba), this protein is GATA zinc finger domain-containing protein 11 (gtaK).